Consider the following 525-residue polypeptide: MSDIHEHKILILDFGSQYTQLIARRIREIGVYCELWAWDVTEAQIREFAPNGIILAGGPESVTADNSPRAPEYVFNAGVPVLGICYGMQTMSEQLGGKVIQGVGEGEFGYAQIEMLAESALFKGIEDAVSSDGKSLLDVWMSHGDKVSAIPAGFVAVAKTDTCPFAAMSCEEKRFYGVQFHPEVTHTRQGMRMLSHFALDICGCAANWKPSSIIEDAIERLKKQVGDDEVILGLSGGVDSSVVAMLLHRAIGKKLTCVFVDNGLLRLNEAKQVMEMFGDHFGLNIVHVDAENRFLDALKGEADPEAKRKIIGRVFVEIFDEEAKKCVNAKWLAQGTIYPDVIESAGSATGKAHVIKSHHNVGGLPDDMELGLVEPLRELFKDEVRKIGLELGLPYNMLYRHPFPGPGLGVRVLGEVKKEYCDLLRRADAIFIEELHKADLYNKVSQAFTVFLPVRSVGVMGDGRKYDWVVSLRAVETIDFMTAHWAHLPYDFLGRVSNRIINEVDGISRVVYDISGKPPATIEWE.

The 200-residue stretch at 8-207 (KILILDFGSQ…ALDICGCAAN (200 aa)) folds into the Glutamine amidotransferase type-1 domain. Cys85 acts as the Nucleophile in catalysis. Active-site residues include His181 and Glu183. The region spanning 208-400 (WKPSSIIEDA…LGLPYNMLYR (193 aa)) is the GMPS ATP-PPase domain. Residue 235–241 (SGGVDSS) coordinates ATP.

As to quaternary structure, homodimer.

The catalysed reaction is XMP + L-glutamine + ATP + H2O = GMP + L-glutamate + AMP + diphosphate + 2 H(+). It functions in the pathway purine metabolism; GMP biosynthesis; GMP from XMP (L-Gln route): step 1/1. In terms of biological role, catalyzes the synthesis of GMP from XMP. This Shewanella oneidensis (strain ATCC 700550 / JCM 31522 / CIP 106686 / LMG 19005 / NCIMB 14063 / MR-1) protein is GMP synthase [glutamine-hydrolyzing].